We begin with the raw amino-acid sequence, 123 residues long: WAP four-disulfide core domain protein 5 (123 aa).

The N-terminal stretch at 1–24 (MRIQSLLLLGALLAVGSQLPAVFG) is a signal peptide. WAP domains are found at residues 27 to 73 (KGEK…CVPR) and 74 to 121 (VSVK…RDPA). Intrachain disulfides connect cysteine 34–cysteine 62, cysteine 41–cysteine 66, cysteine 49–cysteine 61, cysteine 55–cysteine 70, cysteine 81–cysteine 109, cysteine 88–cysteine 113, cysteine 96–cysteine 108, and cysteine 102–cysteine 117.

Its subcellular location is the secreted. In terms of biological role, putative acid-stable proteinase inhibitor. This chain is WAP four-disulfide core domain protein 5 (WFDC5), found in Chlorocebus aethiops (Green monkey).